The primary structure comprises 535 residues: Bifunctional purine biosynthesis protein PurH (535 aa).

An MGS-like domain is found at 6 to 151 (TRLPIRRALI…KNHKDVAIVV (146 aa)).

Belongs to the PurH family.

The catalysed reaction is (6R)-10-formyltetrahydrofolate + 5-amino-1-(5-phospho-beta-D-ribosyl)imidazole-4-carboxamide = 5-formamido-1-(5-phospho-D-ribosyl)imidazole-4-carboxamide + (6S)-5,6,7,8-tetrahydrofolate. It carries out the reaction IMP + H2O = 5-formamido-1-(5-phospho-D-ribosyl)imidazole-4-carboxamide. The protein operates within purine metabolism; IMP biosynthesis via de novo pathway; 5-formamido-1-(5-phospho-D-ribosyl)imidazole-4-carboxamide from 5-amino-1-(5-phospho-D-ribosyl)imidazole-4-carboxamide (10-formyl THF route): step 1/1. Its pathway is purine metabolism; IMP biosynthesis via de novo pathway; IMP from 5-formamido-1-(5-phospho-D-ribosyl)imidazole-4-carboxamide: step 1/1. The protein is Bifunctional purine biosynthesis protein PurH of Pseudomonas fluorescens (strain SBW25).